Here is a 365-residue protein sequence, read N- to C-terminus: WAT1-related protein At4g01440 (365 aa).

Helical transmembrane passes span 8–28, 40–60, 72–92, 101–121, 132–152, 181–201, 213–233, 249–269, 277–297, and 302–322; these read WTPVIIMVMINSALGLANALV, VIATYRLAISTLFLAPIAFFW, ILVQLFFSALVGASLTQYFFL, TLACAFISMTPAITFVMALIF, AGMGMVMGALICIGGALLLTM, WIIGCVLLFAGSSCFGSWMLI, YSSTVVLSFFGTIQCALLSLI, IVTIVYAGAVAQGICTVGTSW, IFTSIFTPVGLIFATLFDFLI, and IFLGSVVGSGVVIFGLYIFLL. 2 EamA domains span residues 25-144 and 196-321; these read NALV…LICI and GSWM…YIFL.

This sequence belongs to the drug/metabolite transporter (DMT) superfamily. Plant drug/metabolite exporter (P-DME) (TC 2.A.7.4) family.

Its subcellular location is the membrane. This is WAT1-related protein At4g01440 from Arabidopsis thaliana (Mouse-ear cress).